The primary structure comprises 483 residues: Glutamyl-tRNA(Gln) amidotransferase subunit A (483 aa).

Active-site charge relay system residues include Lys76 and Ser151. Ser175 acts as the Acyl-ester intermediate in catalysis.

It belongs to the amidase family. GatA subfamily. Heterotrimer of A, B and C subunits.

It catalyses the reaction L-glutamyl-tRNA(Gln) + L-glutamine + ATP + H2O = L-glutaminyl-tRNA(Gln) + L-glutamate + ADP + phosphate + H(+). In terms of biological role, allows the formation of correctly charged Gln-tRNA(Gln) through the transamidation of misacylated Glu-tRNA(Gln) in organisms which lack glutaminyl-tRNA synthetase. The reaction takes place in the presence of glutamine and ATP through an activated gamma-phospho-Glu-tRNA(Gln). The sequence is that of Glutamyl-tRNA(Gln) amidotransferase subunit A from Pseudomonas syringae pv. syringae (strain B728a).